A 214-amino-acid chain; its full sequence is Pyridoxine/pyridoxamine 5'-phosphate oxidase (214 aa).

Residues 8-11 and K66 each bind substrate; that span reads RTNY. Residues 61-66, 76-77, R82, K83, and Q105 each bind FMN; these read RIVLIK and FT. Y123, R127, and S131 together coordinate substrate. FMN is bound by residues 140–141 and W184; that span reads QS. 190–192 contributes to the substrate binding site; the sequence is RLH. R194 is a binding site for FMN.

It belongs to the pyridoxamine 5'-phosphate oxidase family. Homodimer. The cofactor is FMN.

The enzyme catalyses pyridoxamine 5'-phosphate + O2 + H2O = pyridoxal 5'-phosphate + H2O2 + NH4(+). It catalyses the reaction pyridoxine 5'-phosphate + O2 = pyridoxal 5'-phosphate + H2O2. It functions in the pathway cofactor metabolism; pyridoxal 5'-phosphate salvage; pyridoxal 5'-phosphate from pyridoxamine 5'-phosphate: step 1/1. The protein operates within cofactor metabolism; pyridoxal 5'-phosphate salvage; pyridoxal 5'-phosphate from pyridoxine 5'-phosphate: step 1/1. Functionally, catalyzes the oxidation of either pyridoxine 5'-phosphate (PNP) or pyridoxamine 5'-phosphate (PMP) into pyridoxal 5'-phosphate (PLP). The polypeptide is Pyridoxine/pyridoxamine 5'-phosphate oxidase (Burkholderia pseudomallei (strain 1106a)).